The following is a 154-amino-acid chain: Ribonuclease HI (154 aa).

One can recognise an RNase H type-1 domain in the interval 1–142 (MPKQIEIFTD…CDELAKKGAE (142 aa)). The Mg(2+) site is built by D10, E48, D70, and D134.

The protein belongs to the RNase H family. Monomer. The cofactor is Mg(2+).

It is found in the cytoplasm. It catalyses the reaction Endonucleolytic cleavage to 5'-phosphomonoester.. Its function is as follows. Endonuclease that specifically degrades the RNA of RNA-DNA hybrids. The polypeptide is Ribonuclease HI (rnhA) (Haemophilus influenzae (strain ATCC 51907 / DSM 11121 / KW20 / Rd)).